The primary structure comprises 223 residues: Small ribosomal subunit protein uS3 (223 aa).

The 69-residue stretch at V39–R107 folds into the KH type-2 domain.

The protein belongs to the universal ribosomal protein uS3 family. In terms of assembly, part of the 30S ribosomal subunit. Forms a tight complex with proteins S10 and S14.

Its function is as follows. Binds the lower part of the 30S subunit head. Binds mRNA in the 70S ribosome, positioning it for translation. The sequence is that of Small ribosomal subunit protein uS3 from Francisella tularensis subsp. holarctica (strain FTNF002-00 / FTA).